The primary structure comprises 596 residues: Genetic interactor of prohibitins 3, mitochondrial (596 aa).

The N-terminal 21 residues, 1–21 (MLNLCHALRGVRQFSCSVIVK), are a transit peptide targeting the mitochondrion. Residues 113 to 305 (ESTLNDILNY…LFDLPGYSTS (193 aa)) enclose the CP-type G domain.

It belongs to the TRAFAC class YlqF/YawG GTPase family. GEP3 subfamily.

It is found in the mitochondrion. Interacts genetically with prohibitins and thus may be involved in the mitochondrial lipid metabolism. This is Genetic interactor of prohibitins 3, mitochondrial (GEP3) from Saccharomyces cerevisiae (strain AWRI796) (Baker's yeast).